We begin with the raw amino-acid sequence, 1257 residues long: Liprin-alpha-2 (1257 aa).

3 disordered regions span residues 1–29, 231–265, and 438–463; these read MMCE…DSDS, ASSE…DSTD, and EGQL…EHNK. Over residues 16–26 the composition is skewed to low complexity; that stretch reads SQRGSQSSGSD. Coiled-coil stretches lie at residues 29 to 154, 185 to 541, and 643 to 695; these read SHFE…SLRM, KALD…SLIE, and HSDA…GLNL. Residue Ser-236 is modified to Phosphoserine. Position 237 is a phosphothreonine (Thr-237). Residues 238–256 show a composition bias toward basic and acidic residues; that stretch reads ESEHLEGMEPGQKVHEKRL. At Ser-239 the chain carries Phosphoserine. Ser-687 and Ser-689 each carry phosphoserine. Low complexity-rich tracts occupy residues 709 to 725 and 798 to 813; these read TASS…HSTP and SSLS…GLGS. 2 disordered regions span residues 709 to 738 and 790 to 834; these read TASS…EMDR and SSYH…KSSI. Ser-817 and Ser-820 each carry phosphoserine. SAM domains lie at 898 to 964, 1020 to 1084, and 1108 to 1177; these read WDGP…MVSL, NHEW…LKRL, and WSND…LLAL. The stretch at 1081–1107 forms a coiled coil; the sequence is LKRLNYDRKELERRREASQHEIKDVLV.

Belongs to the liprin family. Liprin-alpha subfamily. In terms of assembly, forms homodimers and heterodimers with liprins-alpha and liprins-beta. Interacts with the second PTPase domain of PTPRD, PTPRF and PTPRS. Interacts with KIF1A; the interaction decreases in presence of calcium. In terms of tissue distribution, expressed only in brain.

The protein resides in the cytoplasm. The protein localises to the cell surface. It is found in the cell projection. Its subcellular location is the dendritic spine. In terms of biological role, alters PTPRF cellular localization and induces PTPRF clustering. May regulate the disassembly of focal adhesions. May localize receptor-like tyrosine phosphatases type 2A at specific sites on the plasma membrane, possibly regulating their interaction with the extracellular environment and their association with substrates. In neuronal cells, is a scaffolding protein in the dendritic spines which acts as immobile postsynaptic post able to recruit KIF1A-driven dense core vesicles to dendritic spines. In Homo sapiens (Human), this protein is Liprin-alpha-2 (PPFIA2).